A 684-amino-acid chain; its full sequence is Fidgetin-like protein 2 (684 aa).

Polar residues predominate over residues 27 to 41; the sequence is PEQHLDVSSTTSSPA. Disordered stretches follow at residues 27-48, 99-179, and 292-403; these read PEQH…ELYS, PGAF…PHSS, and LDEE…SDPM. Residues 160–179 show a composition bias toward low complexity; sequence SNLSDSGYSGSSSCSGPHSS. Residue A431 coordinates ATP.

This sequence belongs to the AAA ATPase family. Mg(2+) serves as cofactor. Highly expressed in vascular endothelial cells and neuronal cells.

It localises to the cytoplasm. Its subcellular location is the cell cortex. The enzyme catalyses ATP + H2O = ADP + phosphate + H(+). Microtubule-severing enzyme that negatively regulates cell migration and wound healing. In migrating cells, targets dynamic microtubules (MTs) at the leading edge and severs them, thereby suppressing motility. Negative regulator of axon regeneration that suppresses axonal growth by selectively severing dynamic MTs in the distal axon shaft and growth cone. Contributes to proper cell branching during endothelial and neuronal development. This Danio rerio (Zebrafish) protein is Fidgetin-like protein 2 (fignl2).